The sequence spans 142 residues: MKLKIKKLDELAIIPFYAHKGDAGLDLFSIDESTINPGESKLIHTGISIELPSGTEAQIRPRSGLALKHQITVLNTPGTIDETYRGEIGIILINHGKNSFQVTKRMKIAQMVITSVLSVKVEEVNQLSTTQRDINGFGSTGT.

Residues 62 to 64, asparagine 75, and 79 to 81 each bind substrate; these read RSG and TID.

Belongs to the dUTPase family. Requires Mg(2+) as cofactor.

It catalyses the reaction dUTP + H2O = dUMP + diphosphate + H(+). The protein operates within pyrimidine metabolism; dUMP biosynthesis; dUMP from dCTP (dUTP route): step 2/2. In terms of biological role, this enzyme is involved in nucleotide metabolism: it produces dUMP, the immediate precursor of thymidine nucleotides and it decreases the intracellular concentration of dUTP so that uracil cannot be incorporated into DNA. This is Deoxyuridine 5'-triphosphate nucleotidohydrolase from Trichodesmium erythraeum (strain IMS101).